The sequence spans 245 residues: Thioredoxin-like 1-2, chloroplastic (245 aa).

The transit peptide at 1-92 directs the protein to the chloroplast; sequence MDAISSLGTN…TNHNMLEIQS (92 aa). Positions 93–194 constitute a Thioredoxin domain; the sequence is ANHLVDSLLN…FKKALDKHGS (102 aa). Catalysis depends on nucleophile residues Cys117 and Cys120. Cys117 and Cys120 are oxidised to a cystine.

It belongs to the thioredoxin family.

It is found in the plastid. The protein localises to the chloroplast. In terms of biological role, probable thiol-disulfide oxidoreductase that may participate in various redox reactions. The sequence is that of Thioredoxin-like 1-2, chloroplastic from Arabidopsis thaliana (Mouse-ear cress).